We begin with the raw amino-acid sequence, 68 residues long: UPF0434 protein BURPS668_0926 (68 aa).

The protein belongs to the UPF0434 family.

This is UPF0434 protein BURPS668_0926 from Burkholderia pseudomallei (strain 668).